A 698-amino-acid polypeptide reads, in one-letter code: Polyphosphate kinase 1 (698 aa).

N46 provides a ligand contact to ATP. Mg(2+)-binding residues include R377 and R407. The Phosphohistidine intermediate role is filled by H437. Positions 470, 566, and 594 each coordinate ATP.

Belongs to the polyphosphate kinase 1 (PPK1) family. It depends on Mg(2+) as a cofactor. In terms of processing, an intermediate of this reaction is the autophosphorylated ppk in which a phosphate is covalently linked to a histidine residue through a N-P bond.

The catalysed reaction is [phosphate](n) + ATP = [phosphate](n+1) + ADP. Catalyzes the reversible transfer of the terminal phosphate of ATP to form a long-chain polyphosphate (polyP). The polypeptide is Polyphosphate kinase 1 (Chlorobaculum tepidum (strain ATCC 49652 / DSM 12025 / NBRC 103806 / TLS) (Chlorobium tepidum)).